The chain runs to 509 residues: BPI fold-containing family C protein (509 aa).

A signal peptide spans 1–23 (MRTKQVPVLWACFLLWSLYIASS). N-linked (GlcNAc...) asparagine glycosylation is found at asparagine 63, asparagine 79, asparagine 92, asparagine 113, and asparagine 117. A disulfide bond links cysteine 161 and cysteine 202. N-linked (GlcNAc...) asparagine glycosylation is found at asparagine 215, asparagine 227, asparagine 357, asparagine 374, and asparagine 457.

Belongs to the BPI/LBP/Plunc superfamily. BPI/LBP family.

It localises to the secreted. This Mus musculus (Mouse) protein is BPI fold-containing family C protein (Bpifc).